The primary structure comprises 297 residues: Phosphatidylglycerol--prolipoprotein diacylglyceryl transferase (297 aa).

Helical transmembrane passes span 17 to 37 (LAVRWYGLMYLVGFIAAIVVG), 59 to 79 (MLFYGVLGTVLGGRLGYVLFY), and 97 to 117 (GGMSFHGGFLGVTLAMVLFAW). Arg142 contacts a 1,2-diacyl-sn-glycero-3-phospho-(1'-sn-glycerol). 2 consecutive transmembrane segments (helical) span residues 230–250 (MGAVSALFLIGYGLARFTVEF) and 257–277 (FLGLLALGLSMGQWLSLPMIV).

Belongs to the Lgt family.

It is found in the cell inner membrane. The catalysed reaction is L-cysteinyl-[prolipoprotein] + a 1,2-diacyl-sn-glycero-3-phospho-(1'-sn-glycerol) = an S-1,2-diacyl-sn-glyceryl-L-cysteinyl-[prolipoprotein] + sn-glycerol 1-phosphate + H(+). It functions in the pathway protein modification; lipoprotein biosynthesis (diacylglyceryl transfer). Functionally, catalyzes the transfer of the diacylglyceryl group from phosphatidylglycerol to the sulfhydryl group of the N-terminal cysteine of a prolipoprotein, the first step in the formation of mature lipoproteins. In Burkholderia multivorans (strain ATCC 17616 / 249), this protein is Phosphatidylglycerol--prolipoprotein diacylglyceryl transferase.